Reading from the N-terminus, the 483-residue chain is MKTLNRRDFPGALWPERIIQFGEGNFLRAFIDWQVDLLNEHTDLNAGVVVVRPIASDFPPSLSTQDGLYTTIIRGLNEKGEAVSESRLIRSVNREISVYAQYDEFLKLAHNPDIRFVFSNTTEAGISYHAGDQFDDAPAVSYPAKLTRLLFERFSHFDGAQDKGWVIIPCELIDYNGEALRELVLRYAHEWALPAAFTTWLESANSFCSTLVDRIVTGYPRDEVAQLEESLGYHDAFLDTAEHFYLFVIQGPQWLARELRLDKLPLNVLIVDDIKPYKARKVAILNGAHTALVPVAFLAGLNTVGEAMNDAQICAFVERAIHDEIIPVLDLPRNELESFADAVVSRFRNPYIKHQLLSIALNGMTKFRTRILPQLLAGQAQMGTLPPRLTFALAALIAFYRGERNGEGYPLQDDAHWLARFEQLWTQRGDNTITLRELVDAVLSDCEHWEQDLTAVPGLAAQVTRDLDAILNQGMRHAVAPLC.

18 to 29 provides a ligand contact to NAD(+); the sequence is IIQFGEGNFLRA.

The protein belongs to the mannitol dehydrogenase family. UxaB subfamily.

It carries out the reaction D-altronate + NAD(+) = keto-D-tagaturonate + NADH + H(+). It functions in the pathway carbohydrate metabolism; pentose and glucuronate interconversion. The protein is Altronate oxidoreductase of Cronobacter sakazakii (strain ATCC BAA-894) (Enterobacter sakazakii).